Consider the following 392-residue polypeptide: Ribonuclease D (392 aa).

The region spanning 12 to 178 (LIETTEALAA…PVYEGLRARL (167 aa)) is the 3'-5' exonuclease domain. In terms of domain architecture, HRDC spans 217 to 298 (NRRQLALVKA…ASTKAIPDAE (82 aa)).

It belongs to the RNase D family. It depends on a divalent metal cation as a cofactor.

Its subcellular location is the cytoplasm. The enzyme catalyses Exonucleolytic cleavage that removes extra residues from the 3'-terminus of tRNA to produce 5'-mononucleotides.. Functionally, exonuclease involved in the 3' processing of various precursor tRNAs. Initiates hydrolysis at the 3'-terminus of an RNA molecule and releases 5'-mononucleotides. This is Ribonuclease D from Acidiphilium cryptum (strain JF-5).